The following is a 229-amino-acid chain: Germin-like protein subfamily 1 member 7 (229 aa).

Positions 1–24 (MEGFLRFLVAKAILLALASSFVSC) are cleaved as a signal peptide. A disulfide bridge connects residues cysteine 34 and cysteine 50. The Cupin type-1 domain maps to 64–215 (SGLNIAGNTI…AFQLDVNVVK (152 aa)). N-linked (GlcNAc...) asparagine glycosylation occurs at asparagine 79. Mn(2+)-binding residues include histidine 112, histidine 114, glutamate 119, and histidine 161.

It belongs to the germin family. In terms of assembly, oligomer (believed to be a pentamer but probably hexamer).

Its subcellular location is the secreted. The protein localises to the extracellular space. The protein resides in the apoplast. Functionally, may play a role in plant defense. Probably has no oxalate oxidase activity even if the active site is conserved. This is Germin-like protein subfamily 1 member 7 from Arabidopsis thaliana (Mouse-ear cress).